A 492-amino-acid polypeptide reads, in one-letter code: Probable sphingolipid transporter spinster homolog 1 (492 aa).

The chain crosses the membrane as a helical span at residues 29 to 49 (FVTILCIINLINYVDRGVIAS). N-linked (GlcNAc...) asparagine glycosylation is found at N53 and N76. Helical transmembrane passes span 83-103 (GLLS…FAGL), 119-139 (VWTI…IAVF), 141-161 (MFVG…IDDS), 169-189 (FWLG…YVFG), 200-220 (WAFY…FCIK), 279-299 (VFIV…AYSY), and 317-337 (IFGG…SYVL). N341 is a glycosylation site (N-linked (GlcNAc...) asparagine). Transmembrane regions (helical) follow at residues 348–368 (FKLL…AFLM), 372–392 (YAFI…QAPV), 407–427 (LSMA…SSPL), and 442–462 (TLII…GIFM). Residue S472 is modified to Phosphoserine. The segment covering 472–481 (SEDDEVEEDK) has biased composition (acidic residues). Residues 472–492 (SEDDEVEEDKLESKTENSTLA) form a disordered region. N-linked (GlcNAc...) asparagine glycosylation is present at N488.

The protein belongs to the major facilitator superfamily. Spinster (TC 2.A.1.49) family.

The protein localises to the late endosome membrane. Its subcellular location is the lysosome membrane. Probable sphingolipid transporter that plays a central role in endosomes and/or lysosomes storage. The polypeptide is Probable sphingolipid transporter spinster homolog 1 (Arabidopsis thaliana (Mouse-ear cress)).